A 265-amino-acid polypeptide reads, in one-letter code: uncharacterized protein (265 aa).

A disordered region spans residues 233–265 (STACGSDQRPTRLPRASCSSRSISGSAARPWKR). A compositionally biased stretch (low complexity) spans 247 to 265 (RASCSSRSISGSAARPWKR).

This is an uncharacterized protein from Escherichia coli.